A 129-amino-acid polypeptide reads, in one-letter code: Large ribosomal subunit protein uL22 (129 aa).

The protein belongs to the universal ribosomal protein uL22 family. As to quaternary structure, part of the 50S ribosomal subunit.

Functionally, this protein binds specifically to 23S rRNA; its binding is stimulated by other ribosomal proteins, e.g. L4, L17, and L20. It is important during the early stages of 50S assembly. It makes multiple contacts with different domains of the 23S rRNA in the assembled 50S subunit and ribosome. Its function is as follows. The globular domain of the protein is located near the polypeptide exit tunnel on the outside of the subunit, while an extended beta-hairpin is found that lines the wall of the exit tunnel in the center of the 70S ribosome. The protein is Large ribosomal subunit protein uL22 of Phytoplasma sp. (strain STRAWB2).